Consider the following 322-residue polypeptide: Cytochrome f (322 aa).

An N-terminal signal peptide occupies residues 1–35; that stretch reads MQNRNIFSWVKEQTTRSISVSIMILIYVITWTSIS. 4 residues coordinate heme: Tyr38, Cys58, Cys61, and His62. The helical transmembrane segment at 288 to 308 threads the bilayer; it reads VQGLFFFFASVILAQIFLVLK.

The protein belongs to the cytochrome f family. The 4 large subunits of the cytochrome b6-f complex are cytochrome b6, subunit IV (17 kDa polypeptide, petD), cytochrome f and the Rieske protein, while the 4 small subunits are PetG, PetL, PetM and PetN. The complex functions as a dimer. Heme is required as a cofactor.

It localises to the plastid. It is found in the chloroplast thylakoid membrane. Functionally, component of the cytochrome b6-f complex, which mediates electron transfer between photosystem II (PSII) and photosystem I (PSI), cyclic electron flow around PSI, and state transitions. This Nandina domestica (Heavenly bamboo) protein is Cytochrome f.